Reading from the N-terminus, the 142-residue chain is Transcription antitermination protein NusB (142 aa).

This sequence belongs to the NusB family.

In terms of biological role, involved in transcription antitermination. Required for transcription of ribosomal RNA (rRNA) genes. Binds specifically to the boxA antiterminator sequence of the ribosomal RNA (rrn) operons. This Anaeromyxobacter dehalogenans (strain 2CP-1 / ATCC BAA-258) protein is Transcription antitermination protein NusB.